The sequence spans 458 residues: ATP synthase subunit beta (458 aa).

An ATP-binding site is contributed by G148–T155.

Belongs to the ATPase alpha/beta chains family. In terms of assembly, F-type ATPases have 2 components, CF(1) - the catalytic core - and CF(0) - the membrane proton channel. CF(1) has five subunits: alpha(3), beta(3), gamma(1), delta(1), epsilon(1). CF(0) has three main subunits: a(1), b(2) and c(9-12). The alpha and beta chains form an alternating ring which encloses part of the gamma chain. CF(1) is attached to CF(0) by a central stalk formed by the gamma and epsilon chains, while a peripheral stalk is formed by the delta and b chains.

The protein localises to the cell inner membrane. It catalyses the reaction ATP + H2O + 4 H(+)(in) = ADP + phosphate + 5 H(+)(out). In terms of biological role, produces ATP from ADP in the presence of a proton gradient across the membrane. The catalytic sites are hosted primarily by the beta subunits. This Shewanella piezotolerans (strain WP3 / JCM 13877) protein is ATP synthase subunit beta.